Reading from the N-terminus, the 162-residue chain is Phosphopantetheine adenylyltransferase (162 aa).

Serine 11 lines the substrate pocket. Residues 11–12 (SF) and histidine 19 contribute to the ATP site. 3 residues coordinate substrate: lysine 43, valine 76, and arginine 90. ATP-binding positions include 91–93 (GLR), glutamate 101, and 126–132 (HLYISSS).

The protein belongs to the bacterial CoaD family. Homohexamer. It depends on Mg(2+) as a cofactor.

The protein resides in the cytoplasm. It carries out the reaction (R)-4'-phosphopantetheine + ATP + H(+) = 3'-dephospho-CoA + diphosphate. The protein operates within cofactor biosynthesis; coenzyme A biosynthesis; CoA from (R)-pantothenate: step 4/5. Functionally, reversibly transfers an adenylyl group from ATP to 4'-phosphopantetheine, yielding dephospho-CoA (dPCoA) and pyrophosphate. The sequence is that of Phosphopantetheine adenylyltransferase from Streptococcus pneumoniae (strain 70585).